We begin with the raw amino-acid sequence, 234 residues long: Cell polarity protein alp11 (234 aa).

A Ubiquitin-like domain is found at 4-88 (ITLFIKSSSA…IVVEDTRPPH (85 aa)). The region spanning 174–216 (VPEINNDNLWVGVEFDEPVGKNDGTVSGKRYFNAKNKHGSFLR) is the CAP-Gly domain. Ser213 is modified (phosphoserine).

It belongs to the TBCB family. As to quaternary structure, binds to monomeric alpha-tubulin. Interacts with alp21.

It is found in the cytoplasm. Its subcellular location is the cytoskeleton. Required for microtubule function and cell polarity. Involved in the proper folding of alpha-tubulin. The polypeptide is Cell polarity protein alp11 (alp11) (Schizosaccharomyces pombe (strain 972 / ATCC 24843) (Fission yeast)).